Reading from the N-terminus, the 358-residue chain is MSMAEVCCDSAVVVGAEAEARARARAGRRRRAGVEGAGRWNATATAAGVAAEEAATRKRRASGGEAGLVVVAKRHGAASVAGRRREMEDAVSLREAFAAPANGEVAAARCDFYGVFDGHGCSHVADACRERMHELVAEEMGAGSPAAAAREPASWTETMERSFARMDAEVIAGCRAESGSCRCEGQKCDHVGSTAVVAVVEESRVVVANCGDSRAVLCRGGAPVQLSSDHKPDRPDELERIEAAGGRVIFWEGARVLGVLAMSRSIGDAYLKPYVTAVPEVTVTGRSDFDECLILASDGLWDVVSNEAACEVAQSCLRRGRQRWCAEAAAVLTKLALARRSSDNISVVVVDLRRGNAL.

The region spanning arginine 74 to leucine 352 is the PPM-type phosphatase domain. Positions 117, 118, 298, and 343 each coordinate Mn(2+).

This sequence belongs to the PP2C family. Mg(2+) serves as cofactor. Mn(2+) is required as a cofactor.

It is found in the nucleus. Its subcellular location is the cytoplasm. It localises to the cytosol. It catalyses the reaction O-phospho-L-seryl-[protein] + H2O = L-seryl-[protein] + phosphate. It carries out the reaction O-phospho-L-threonyl-[protein] + H2O = L-threonyl-[protein] + phosphate. In terms of biological role, involved in the regulation of abiotic stress responses. Acts as a negative regulator of abscisic acid (ABA) signaling and positive regulator of abiotic stress signaling. May be involved in panicle development. This is Probable protein phosphatase 2C 68 from Oryza sativa subsp. japonica (Rice).